A 177-amino-acid chain; its full sequence is Ribonuclease clavin (177 aa).

The signal sequence occupies residues 1–27; sequence MVAIKNLVLVALTAVTALAMPSPLEER. Disulfide bonds link C33–C175 and C103–C159. The active site involves H77. A disordered region spans residues 98–117; it reads WGNSDCDRPPKHSKNGDGKN. Positions 102–117 are enriched in basic and acidic residues; the sequence is DCDRPPKHSKNGDGKN. The Proton acceptor role is filled by E123. Catalysis depends on H164, which acts as the Proton donor.

Belongs to the ribonuclease U2 family.

It is found in the secreted. Functionally, clavin has the same substrate specificity as alpha-sarcin. It is specific for purines in both single- and double-stranded RNA. Its toxic action on eukaryotic cells is the result of cleavage of a single phosphodiester bond in the 60S subunit of ribosomes. This is Ribonuclease clavin (cla) from Aspergillus clavatus (strain ATCC 1007 / CBS 513.65 / DSM 816 / NCTC 3887 / NRRL 1 / QM 1276 / 107).